The chain runs to 139 residues: Flagellar assembly factor FliW 2 (139 aa).

This sequence belongs to the FliW family. Interacts with translational regulator CsrA and flagellin(s).

It is found in the cytoplasm. In terms of biological role, acts as an anti-CsrA protein, binds CsrA and prevents it from repressing translation of its target genes, one of which is flagellin. Binds to flagellin and participates in the assembly of the flagellum. In Helicobacter hepaticus (strain ATCC 51449 / 3B1), this protein is Flagellar assembly factor FliW 2.